The chain runs to 393 residues: Ceramide synthase 4 (393 aa).

Residues 1 to 31 (MSFSLSEWLWQETYWLPPNVTWAELEDRDGL) lie on the Lumenal side of the membrane. Asn19 is a glycosylation site (N-linked (GlcNAc...) asparagine). Residues 32-52 (VFAHPHHVLAAFPVALVLVAV) traverse the membrane as a helical segment. The tract at residues 67-128 (WMGVQDPIRR…RRRRNQDRPS (62 aa)) is homeobox-like. Residues 131–332 (KKFCEACWRF…ILRMLYSFLH (202 aa)) enclose the TLC domain. Helical transmembrane passes span 140–160 (FVFYLCSFVGGTSILYHESWL), 179–199 (LYWWYLLELGFYLSLLITLPF), 217–237 (VGLIGFSYSVNLLRIGAVVLL), and 265–285 (FIMFALVFFYTRLIFFPTQVI). Positions 291 to 301 (DSIKNSGPFFG) match the Last loop motif motif. The chain crosses the membrane as a helical span at residues 304–324 (FFIVLLVMLQILHVYWFCLIL). Residues 325-393 (RMLYSFLHKG…CLTNGHTRAT (69 aa)) are Cytoplasmic-facing. Positions 341 to 393 (RSDVEEPDSSDDEPVSEGPQLKNGMARGSRVAVTNGPRSRAAACLTNGHTRAT) are disordered. 3 positions are modified to phosphoserine: Ser342, Ser349, and Ser350. Over residues 345 to 355 (EEPDSSDDEPV) the composition is skewed to acidic residues.

Phosphorylated at the C-terminus by CK2. In terms of tissue distribution, ubiquitously expressed, with highest levels in skin.

Its subcellular location is the endoplasmic reticulum membrane. The enzyme catalyses sphinganine + octadecanoyl-CoA = N-(octadecanoyl)-sphinganine + CoA + H(+). It catalyses the reaction eicosanoyl-CoA + sphinganine = N-eicosanoylsphinganine + CoA + H(+). The catalysed reaction is docosanoyl-CoA + sphinganine = N-docosanoylsphinganine + CoA + H(+). It carries out the reaction tetracosanoyl-CoA + sphinganine = N-tetracosanoylsphinganine + CoA + H(+). The enzyme catalyses hexacosanoyl-CoA + sphinganine = N-hexacosanoylsphinganine + CoA + H(+). It catalyses the reaction a fatty acyl-CoA + sphing-4-enine = an N-acylsphing-4-enine + CoA + H(+). The catalysed reaction is sphing-4-enine + octadecanoyl-CoA = N-octadecanoylsphing-4-enine + CoA + H(+). It carries out the reaction hexadecasphinganine + octadecanoyl-CoA = N-octadecanoylhexadecasphinganine + CoA + H(+). The protein operates within lipid metabolism; sphingolipid metabolism. In terms of biological role, ceramide synthase that catalyzes formation of ceramide from sphinganine and acyl-CoA substrates, with high selectivity toward long and very-long chains (C18:0-C22:0) as acyl donor. In Mus musculus (Mouse), this protein is Ceramide synthase 4.